The chain runs to 517 residues: Urethanase (517 aa).

Residues K98 and S173 each act as charge relay system in the active site. Catalysis depends on S197, which acts as the Acyl-ester intermediate.

The protein belongs to the amidase family. As to quaternary structure, homooctamer.

It catalyses the reaction urethane + H2O + H(+) = ethanol + NH4(+) + CO2. Its activity is regulated as follows. Exhibits poor salt tolerance but excellent tolerance to low concentrations of ethanol. EDTA has almost no impact on activity. Activity is increased in the presence of Ca(2+), Mg(2+) and Co(3+) and inhibited in the presence of Al(3+), Zn(2+) and Cu(2+). Hydrolase that can catalyze the degradation of ethyl carbamate (also called urethane), a probable human carcinogen widely found in alcoholic beverages. Can also use methyl carbamate, butyl carbamate, acetamide and urea. Also catalyzes the enantioselective hydrolysis of 2-phenylpropionamide, alpha-chlorophenylacetamide, 2-methyl-3-phenylpropionamide and alpha-methoxyphenylacetamide to the corresponding acids. Is inactive on benzamide and L-glutamine. The sequence is that of Urethanase from Rhizobium radiobacter (Agrobacterium tumefaciens).